Consider the following 507-residue polypeptide: Probable cyclic di-GMP phosphodiesterase PdeG (507 aa).

Transmembrane regions (helical) follow at residues 4–24 and 217–237; these read TLIP…ILNI and LIDK…AAAF. The EAL domain maps to 246–500; it reads SATPEEILRR…DLVKIILSKP (255 aa).

It localises to the cell membrane. The catalysed reaction is 3',3'-c-di-GMP + H2O = 5'-phosphoguanylyl(3'-&gt;5')guanosine + H(+). Functionally, phosphodiesterase (PDE) that catalyzes the hydrolysis of cyclic-di-GMP (c-di-GMP) to 5'-pGpG. This Escherichia coli (strain K12) protein is Probable cyclic di-GMP phosphodiesterase PdeG.